We begin with the raw amino-acid sequence, 257 residues long: tRNA (guanine-N(1)-)-methyltransferase (257 aa).

S-adenosyl-L-methionine contacts are provided by residues Gly-112 and 136–141 (LGDYVL).

The protein belongs to the RNA methyltransferase TrmD family. As to quaternary structure, homodimer.

The protein resides in the cytoplasm. The enzyme catalyses guanosine(37) in tRNA + S-adenosyl-L-methionine = N(1)-methylguanosine(37) in tRNA + S-adenosyl-L-homocysteine + H(+). Specifically methylates guanosine-37 in various tRNAs. The polypeptide is tRNA (guanine-N(1)-)-methyltransferase (Salinispora arenicola (strain CNS-205)).